Here is a 505-residue protein sequence, read N- to C-terminus: Phosphoglycerate kinase A (505 aa).

12 residues coordinate (2R)-3-phosphoglycerate: V32, D33, F34, N35, R48, S70, H71, G73, R74, R224, H260, and R261. Positions 306 and 307 each coordinate ADP. Residue G306 coordinates CDP. The AMP site is built by A307 and K308. A307 lines the ATP pocket. A Mg(2+)-binding site is contributed by A307. K308 serves as a coordination point for (2R)-3-phosphoglycerate. A CDP-binding site is contributed by E311. Mg(2+) is bound at residue E311. Positions 312 and 330 each coordinate ADP. Position 312 (K312) interacts with AMP. ATP is bound at residue K312. G330 provides a ligand contact to CDP. AMP is bound by residues A331 and A403. ATP-binding residues include A331 and A403. Positions 403 and 427 each coordinate ADP. G428 and F433 together coordinate CDP. Residues F433, E434, E466, and S467 each contribute to the ADP site. E434 is an AMP binding site. 3 residues coordinate ATP: E434, E466, and S467. A Mg(2+)-binding site is contributed by E466.

This sequence belongs to the phosphoglycerate kinase family. Monomer. The cofactor is Mg(2+).

It carries out the reaction (2R)-3-phosphoglycerate + ATP = (2R)-3-phospho-glyceroyl phosphate + ADP. It participates in carbohydrate degradation; glycolysis; pyruvate from D-glyceraldehyde 3-phosphate: step 2/5. This is Phosphoglycerate kinase A from Trypanosoma brucei brucei.